A 906-amino-acid polypeptide reads, in one-letter code: Kinesin-like protein KIN-7G (906 aa).

Residues 26 to 344 (SVAVAVRFRP…LKFAHRAKHI (319 aa)) form the Kinesin motor domain. ATP is bound at residue 105-112 (GVTSSGKT). 3 coiled-coil regions span residues 346 to 385 (IQAT…RTGT), 733 to 814 (SDEF…GRNQ), and 839 to 875 (GDMN…LEKE). The segment at 803–840 (RLSSELASGRNQRRGSHGPRGARRESHTKRYEPARRGD) is disordered. Over residues 813 to 823 (NQRRGSHGPRG) the composition is skewed to basic residues. Residues 824–840 (ARRESHTKRYEPARRGD) are compositionally biased toward basic and acidic residues.

It belongs to the TRAFAC class myosin-kinesin ATPase superfamily. Kinesin family. KIN-7 subfamily.

This chain is Kinesin-like protein KIN-7G, found in Oryza sativa subsp. japonica (Rice).